A 105-amino-acid chain; its full sequence is Large ribosomal subunit protein uL24 (105 aa).

It belongs to the universal ribosomal protein uL24 family. As to quaternary structure, part of the 50S ribosomal subunit.

In terms of biological role, one of two assembly initiator proteins, it binds directly to the 5'-end of the 23S rRNA, where it nucleates assembly of the 50S subunit. Functionally, one of the proteins that surrounds the polypeptide exit tunnel on the outside of the subunit. The polypeptide is Large ribosomal subunit protein uL24 (Francisella philomiragia subsp. philomiragia (strain ATCC 25017 / CCUG 19701 / FSC 153 / O#319-036)).